Consider the following 38-residue polypeptide: Lebetin-2-alpha (38 aa).

The segment at glycine 1–glycine 38 is disordered. Cysteine 14 and cysteine 30 are disulfide-bonded.

This sequence belongs to the natriuretic peptide family. Expressed by the venom gland.

The protein localises to the secreted. Functionally, inhibits platelet aggregation induced by thrombin, collagen and PAF-acether. Human platelet aggregation induced by thrombin is inhibited by synthetic lebetin-1-alpha with (IC(50)=140 nM). In vivo, inhibits collagen-induced thrombocytopenia in rats. Is not toxic upon intravenous injection into mice and rats. Its function is as follows. Inhibits platelet aggregation induced by thrombin, collagen and PAF-acether. Human platelet aggregation induced by thrombin is inhibited by synthetic lebetin-1-beta with (IC(50)=32 nM). In vivo, inhibits collagen-induced thrombocytopenia in rats. Is not toxic upon intravenous injection into mice and rats. Inhibits platelet aggregation induced by thrombin, collagen and PAF-acether. Human platelet aggregation induced by thrombin is inhibited by synthetic lebetin-1-gamma with (IC(50)=5 nM). In vivo, inhibits collagen-induced thrombocytopenia in rats. Is not toxic upon intravenous injection into mice and rats. In terms of biological role, inhibits platelet aggregation induced by thrombin, collagen and PAF-acether. Human platelet aggregation induced by thrombin is inhibited by synthetic lebetin-1-alpha with (IC(50)=2.5 nM). In vivo, inhibits collagen-induced thrombocytopenia in rats. Is not toxic upon intravenous injection into mice and rats. Functionally, inhibits platelet aggregation induced by thrombin, collagen and PAF-acether. Human platelet aggregation induced by thrombin is inhibited by synthetic lebetin-1-alpha with (IC(50)=2.8 nM). In vivo, inhibits collagen-induced thrombocytopenia in rats. Is not toxic upon intravenous injection into mice and rats. This Macrovipera lebetinus (Levantine viper) protein is Lebetin-2-alpha.